Here is a 187-residue protein sequence, read N- to C-terminus: Guanylate kinase (187 aa).

An N-acetylserine modification is found at Ser2. A Guanylate kinase-like domain is found at 2-184; the sequence is SRPIVISGPS…AYKELKDFIF (183 aa). 9 to 16 contributes to the ATP binding site; the sequence is GPSGTGKS. Residues Ser35, 39-42, Tyr51, Glu70, 79-81, and Asp101 contribute to the GMP site; these read RTPR and YGS. At Ser149 the chain carries Phosphoserine. Tyr157 is modified (phosphotyrosine).

The protein belongs to the guanylate kinase family. Monomer.

The enzyme catalyses GMP + ATP = GDP + ADP. Functionally, catalyzes the reversible transfer of the terminal phosphoryl group of ATP to the acceptor molecule GMP. Essential for recycling GMP and indirectly, cGMP. The protein is Guanylate kinase (GUK1) of Saccharomyces cerevisiae (strain ATCC 204508 / S288c) (Baker's yeast).